The chain runs to 142 residues: Baculoviral IAP repeat-containing protein 5 (142 aa).

The BIR repeat unit spans residues 18-88 (RISTFKNWPF…KHSSGCAFLS (71 aa)). At Ser-20 the chain carries Phosphoserine; by AURKC. Lys-23 carries the post-translational modification N6-acetyllysine. Phosphothreonine; by CDK1 and CDK15 is present on Thr-34. Thr-48 carries the post-translational modification Phosphothreonine. Zn(2+) contacts are provided by Cys-57, Cys-60, His-77, and Cys-84. Lys-90, Lys-110, Lys-112, and Lys-115 each carry N6-acetyllysine. The residue at position 117 (Thr-117) is a Phosphothreonine; by AURKB. Lys-129 is modified (N6-acetyllysine).

It belongs to the IAP family. Monomer or homodimer. Exists as a homodimer in the apo state and as a monomer in the CPC-bound state. The monomer protects cells against apoptosis more efficiently than the dimer. Only the dimeric form is capable of enhancing tubulin stability in cells. When phosphorylated, interacts with LAMTOR5/HBXIP; the resulting complex binds pro-CASP9, as well as active CASP9, but much less efficiently. Component of the chromosomal passenger complex (CPC) composed of at least BIRC5/survivin, CDCA8/borealin, INCENP, AURKB or AURKC; in the complex forms a triple-helix bundle-based subcomplex with INCENP and CDCA8. Interacts with JTB. Interacts (via BIR domain) with histone H3 phosphorylated at 'Thr-3' (H3pT3). Interacts with EVI5. Interacts with GTP-bound RAN in both the S and M phases of the cell cycle. Interacts with USP9X. Interacts with tubulin. Interacts with BIRC2/c-IAP1. The acetylated form at Lys-129 interacts with STAT3. The monomeric form deacetylated at Lys-129 interacts with XPO1/CRM1. The monomeric form interacts with XIAP/BIRC4. Both the dimeric and monomeric form can interact with DIABLO/SMAC. Interacts with BIRC6/bruce. Interacts with FBXL7; this interaction facilitates the polyubiquitination and subsequent proteasomal degradation of BIRC5 by the SCF(FBXL7) E3 ubiquitin-protein ligase complex. Post-translationally, ubiquitinated by the Cul9-RING ubiquitin-protein ligase complex, leading to its degradation. Ubiquitination is required for centrosomal targeting. Deubiquitinated by USP35 or USP38; leading to stabilization. In terms of processing, acetylation at Lys-129 results in its homodimerization, while deacetylation promotes the formation of monomers which heterodimerize with XPO1/CRM1 which facilitates its nuclear export. The acetylated form represses STAT3 transactivation. The dynamic equilibrium between its acetylation and deacetylation at Lys-129 determines its interaction with XPO1/CRM1, its subsequent subcellular localization, and its ability to inhibit STAT3 transactivation. In vitro phosphorylation at Thr-117 by AURKB prevents interaction with INCENP and localization to mitotic chromosomes. Phosphorylation at Thr-48 by CK2 is critical for its mitotic and anti-apoptotic activities. Phosphorylation at Thr-34 by CDK15 is critical for its anti-apoptotic activity. Phosphorylation at Ser-20 by AURKC is critical for regulation of proper chromosome alignment and segregation, and possibly cytokinesis.

It is found in the cytoplasm. The protein localises to the nucleus. Its subcellular location is the chromosome. The protein resides in the centromere. It localises to the cytoskeleton. It is found in the spindle. The protein localises to the kinetochore. Its subcellular location is the midbody. Its function is as follows. Multitasking protein that has dual roles in promoting cell proliferation and preventing apoptosis. Component of a chromosome passage protein complex (CPC) which is essential for chromosome alignment and segregation during mitosis and cytokinesis. Acts as an important regulator of the localization of this complex; directs CPC movement to different locations from the inner centromere during prometaphase to midbody during cytokinesis and participates in the organization of the center spindle by associating with polymerized microtubules. Involved in the recruitment of CPC to centromeres during early mitosis via association with histone H3 phosphorylated at 'Thr-3' (H3pT3) during mitosis. The complex with RAN plays a role in mitotic spindle formation by serving as a physical scaffold to help deliver the RAN effector molecule TPX2 to microtubules. May counteract a default induction of apoptosis in G2/M phase. The acetylated form represses STAT3 transactivation of target gene promoters. May play a role in neoplasia. Inhibitor of CASP3 and CASP7. Essential for the maintenance of mitochondrial integrity and function. The sequence is that of Baculoviral IAP repeat-containing protein 5 (BIRC5) from Sus scrofa (Pig).